The following is a 236-amino-acid chain: 2-C-methyl-D-erythritol 4-phosphate cytidylyltransferase (236 aa).

This sequence belongs to the IspD/TarI cytidylyltransferase family. IspD subfamily.

It carries out the reaction 2-C-methyl-D-erythritol 4-phosphate + CTP + H(+) = 4-CDP-2-C-methyl-D-erythritol + diphosphate. The protein operates within isoprenoid biosynthesis; isopentenyl diphosphate biosynthesis via DXP pathway; isopentenyl diphosphate from 1-deoxy-D-xylulose 5-phosphate: step 2/6. Its function is as follows. Catalyzes the formation of 4-diphosphocytidyl-2-C-methyl-D-erythritol from CTP and 2-C-methyl-D-erythritol 4-phosphate (MEP). This Burkholderia orbicola (strain AU 1054) protein is 2-C-methyl-D-erythritol 4-phosphate cytidylyltransferase.